The chain runs to 248 residues: MIIVGDIGNTETKICLVNSKNIIIKRVILLTKKINHSSLNKSLLGLNLKNKSINKCLFCSVVPKKFNAVKIFFKKVYKIKCHELKKLNLNKLIKIKVNYKQIGSDRLANAISIINNKDNFIILDFGTATTFDVLIKNTYHGGVIAPGVKLSLDTLTDKASQIPKINLKKTNRVIGLNTISAVRAGFFWGYEGLIDNIVNLIKKETKMSFKIIITGGFSGLFKNSIKTKVTLNKDITIKGLIRATTLIK.

ATP is bound at residue 6–13; the sequence is DIGNTETK. 103 to 106 provides a ligand contact to substrate; the sequence is GSDR. Residue Asp105 is the Proton acceptor of the active site. Asp124 provides a ligand contact to K(+). Thr127 is a binding site for ATP. Thr178 is a substrate binding site.

This sequence belongs to the type III pantothenate kinase family. Homodimer. The cofactor is NH4(+). It depends on K(+) as a cofactor.

Its subcellular location is the cytoplasm. The catalysed reaction is (R)-pantothenate + ATP = (R)-4'-phosphopantothenate + ADP + H(+). Its pathway is cofactor biosynthesis; coenzyme A biosynthesis; CoA from (R)-pantothenate: step 1/5. Functionally, catalyzes the phosphorylation of pantothenate (Pan), the first step in CoA biosynthesis. The chain is Type III pantothenate kinase from Pelagibacter ubique (strain HTCC1062).